The sequence spans 171 residues: Protein X (171 aa).

Helical transmembrane passes span 11–31 (SWYQIFIAFSLTYTPIAIYSL), 38–58 (LAGIVNIFIFINCCVSFVYLM), and 73–93 (AVIALVWGIYTLVKIVDWLVI).

Its subcellular location is the virion membrane. The sequence is that of Protein X (VPX) from Mus musculus domesticus (western European house mouse).